Consider the following 669-residue polypeptide: Sodium-dependent phosphate transporter (669 aa).

Over methionine 1–aspartate 6 the chain is Extracellular. Residues methionine 7–alanine 27 form a helical membrane-spanning segment. Residues asparagine 28 to lysine 47 are Cytoplasmic-facing. A helical membrane pass occupies residues alanine 48–threonine 68. At aspartate 69–glutamate 86 the chain is on the extracellular side. A helical membrane pass occupies residues phenylalanine 87 to threonine 107. Arginine 108 is a topological domain (cytoplasmic). A helical transmembrane segment spans residues alanine 109–alanine 129. Topologically, residues threonine 130–asparagine 143 are extracellular. The chain crosses the membrane as a helical span at residues isoleucine 144–threonine 164. Residues valine 165–phenylalanine 186 lie on the Cytoplasmic side of the membrane. The chain crosses the membrane as a helical span at residues leucine 187–isoleucine 207. Residues asparagine 208 to serine 239 are Extracellular-facing. The chain crosses the membrane as a helical span at residues isoleucine 240 to isoleucine 260. Residues tyrosine 261–lysine 502 are Cytoplasmic-facing. A compositionally biased stretch (polar residues) spans alanine 311–valine 335. Disordered stretches follow at residues alanine 311–alanine 364 and threonine 392–glutamate 444. Basic and acidic residues predominate over residues lysine 342–lysine 352. Positions asparagine 395–glycine 433 are enriched in low complexity. A helical membrane pass occupies residues valine 503 to glycine 523. Residues tyrosine 524–glycine 542 are Extracellular-facing. Residues phenylalanine 543–leucine 563 form a helical membrane-spanning segment. Residues serine 564–arginine 632 are Cytoplasmic-facing. A helical transmembrane segment spans residues threonine 633–tyrosine 653. Over serine 654–valine 669 the chain is Extracellular.

This sequence belongs to the inorganic phosphate transporter (PiT) (TC 2.A.20) family.

It localises to the cell membrane. The enzyme catalyses 2 Na(+)(out) + phosphate(out) = 2 Na(+)(in) + phosphate(in). Functionally, sodium-phosphate symporter which preferentially transports the monovalent form of phosphate with a stoichiometry of two sodium ions per phosphate ion. The polypeptide is Sodium-dependent phosphate transporter (Plasmodium falciparum).